The primary structure comprises 528 residues: U3 small nucleolar RNA-associated protein 15 homolog (528 aa).

At alanine 2 the chain carries N-acetylalanine. WD repeat units lie at residues lysine 36–threonine 75, arginine 78–glutamine 117, glycine 120–threonine 159, glutamate 162–cysteine 202, glutamate 204–valine 242, asparagine 246–serine 285, and aspartate 287–serine 326. Lysine 249 participates in a covalent cross-link: Glycyl lysine isopeptide (Lys-Gly) (interchain with G-Cter in SUMO2). The interval alanine 508–serine 528 is disordered. A compositionally biased stretch (basic and acidic residues) spans proline 511–serine 528.

As to quaternary structure, part of the small subunit (SSU) processome, composed of more than 70 proteins and the RNA chaperone small nucleolar RNA (snoRNA) U3. May be a component of the proposed t-UTP subcomplex of the ribosomal small subunit (SSU) processome containing at least UTP4, WDR43, HEATR1, UTP15, WDR75. Interacts directly with UTP4 and WDR43.

It localises to the nucleus. The protein resides in the nucleolus. Functionally, ribosome biogenesis factor. Involved in nucleolar processing of pre-18S ribosomal RNA. Required for optimal pre-ribosomal RNA transcription by RNA polymerase I. Part of the small subunit (SSU) processome, first precursor of the small eukaryotic ribosomal subunit. During the assembly of the SSU processome in the nucleolus, many ribosome biogenesis factors, an RNA chaperone and ribosomal proteins associate with the nascent pre-rRNA and work in concert to generate RNA folding, modifications, rearrangements and cleavage as well as targeted degradation of pre-ribosomal RNA by the RNA exosome. This is U3 small nucleolar RNA-associated protein 15 homolog from Rattus norvegicus (Rat).